A 116-amino-acid polypeptide reads, in one-letter code: Large ribosomal subunit protein bL19 (116 aa).

Belongs to the bacterial ribosomal protein bL19 family.

This protein is located at the 30S-50S ribosomal subunit interface and may play a role in the structure and function of the aminoacyl-tRNA binding site. The polypeptide is Large ribosomal subunit protein bL19 (Chloroflexus aurantiacus (strain ATCC 29366 / DSM 635 / J-10-fl)).